Here is a 330-residue protein sequence, read N- to C-terminus: Glycerol-3-phosphate dehydrogenase [NAD(P)+] (330 aa).

The NADPH site is built by S11, F12, R32, and K106. Residues K106, G133, and S135 each coordinate sn-glycerol 3-phosphate. A137 provides a ligand contact to NADPH. Residues K188, D241, S251, R252, and N253 each coordinate sn-glycerol 3-phosphate. Residue K188 is the Proton acceptor of the active site. R252 is an NADPH binding site. Positions 276 and 278 each coordinate NADPH.

The protein belongs to the NAD-dependent glycerol-3-phosphate dehydrogenase family.

It localises to the cytoplasm. The catalysed reaction is sn-glycerol 3-phosphate + NAD(+) = dihydroxyacetone phosphate + NADH + H(+). It catalyses the reaction sn-glycerol 3-phosphate + NADP(+) = dihydroxyacetone phosphate + NADPH + H(+). It functions in the pathway membrane lipid metabolism; glycerophospholipid metabolism. In terms of biological role, catalyzes the reduction of the glycolytic intermediate dihydroxyacetone phosphate (DHAP) to sn-glycerol 3-phosphate (G3P), the key precursor for phospholipid synthesis. This Clostridium botulinum (strain Eklund 17B / Type B) protein is Glycerol-3-phosphate dehydrogenase [NAD(P)+].